The primary structure comprises 210 residues: uncharacterized protein (210 aa).

Residues 4–180 form the PfpI endopeptidase domain; sequence RKVYLYVFHT…AVEVLKKLDV (177 aa). C110 acts as the Nucleophile in catalysis.

The protein belongs to the peptidase C56 family.

This is an uncharacterized protein from Bacillus subtilis (strain 168).